Consider the following 223-residue polypeptide: Agamous-like MADS-box protein AGL11 (223 aa).

One can recognise an MADS-box domain in the interval 1–61; that stretch reads MGRGKIEIKR…GRVYEYSNNN (61 aa). The 91-residue stretch at 87–177 folds into the K-box domain; sequence AQYYQQESAK…RTKIAEVERL (91 aa).

Expressed in flowers and seeds. Expressed in endotesta cell layer of developing seeds.

The protein resides in the nucleus. Its function is as follows. Probable transcription factor involved in seed development. Plays a role in seed morphogenesis by promoting the correct development of endotesta cell layer, which directs the further development of the seed coat, the endosperm, and consequently the embryo. In Vitis vinifera (Grape), this protein is Agamous-like MADS-box protein AGL11.